The following is a 606-amino-acid chain: Glutamine--fructose-6-phosphate aminotransferase [isomerizing] (606 aa).

Cys-2 serves as the catalytic Nucleophile; for GATase activity. One can recognise a Glutamine amidotransferase type-2 domain in the interval 2–217 (CGIVGMVGEN…DGDVMVLRKD (216 aa)). SIS domains are found at residues 284 to 423 (YEEL…INGY) and 455 to 596 (LSEK…PDKP). Lys-601 (for Fru-6P isomerization activity) is an active-site residue.

As to quaternary structure, homodimer.

It localises to the cytoplasm. The enzyme catalyses D-fructose 6-phosphate + L-glutamine = D-glucosamine 6-phosphate + L-glutamate. Its function is as follows. Catalyzes the first step in hexosamine metabolism, converting fructose-6P into glucosamine-6P using glutamine as a nitrogen source. This is Glutamine--fructose-6-phosphate aminotransferase [isomerizing] from Thermotoga maritima (strain ATCC 43589 / DSM 3109 / JCM 10099 / NBRC 100826 / MSB8).